A 137-amino-acid polypeptide reads, in one-letter code: Transcription antitermination protein NusB (137 aa).

Belongs to the NusB family.

Involved in transcription antitermination. Required for transcription of ribosomal RNA (rRNA) genes. Binds specifically to the boxA antiterminator sequence of the ribosomal RNA (rrn) operons. This Proteus mirabilis (strain HI4320) protein is Transcription antitermination protein NusB.